The following is a 1098-amino-acid chain: Ran-binding protein 16 (1098 aa).

It belongs to the exportin family. Binds to nucleoporins and the GTP-bound form of Ran.

The protein resides in the cytoplasm. Its subcellular location is the nucleus. May function as a nuclear transport receptor. In Drosophila melanogaster (Fruit fly), this protein is Ran-binding protein 16 (Ranbp16).